The chain runs to 185 residues: MTIEIQAQQRADQGSSASRRLRRAGVVPGVVYGAGKAAVAISFDHNTLYYALQKEGFHSSILNLVIDGATEQVFVRDVQMHAFKPQVQHIDFQRVDANTVIEAKVPFKFINGEISPAVKMNGKIIGHLLNAAVVRCLPANLPAAIEVDLSTLVAGESVHLSSIKLPEGVEFASLRSGKDLSVARA.

Belongs to the bacterial ribosomal protein bL25 family. CTC subfamily. As to quaternary structure, part of the 50S ribosomal subunit; part of the 5S rRNA/L5/L18/L25 subcomplex. Contacts the 5S rRNA. Binds to the 5S rRNA independently of L5 and L18.

Its function is as follows. This is one of the proteins that binds to the 5S RNA in the ribosome where it forms part of the central protuberance. The chain is Large ribosomal subunit protein bL25 from Laribacter hongkongensis (strain HLHK9).